A 134-amino-acid polypeptide reads, in one-letter code: Small ribosomal subunit protein uS8c (134 aa).

This sequence belongs to the universal ribosomal protein uS8 family. As to quaternary structure, part of the 30S ribosomal subunit.

Its subcellular location is the plastid. The protein resides in the chloroplast. Functionally, one of the primary rRNA binding proteins, it binds directly to 16S rRNA central domain where it helps coordinate assembly of the platform of the 30S subunit. In Lotus japonicus (Lotus corniculatus var. japonicus), this protein is Small ribosomal subunit protein uS8c (rps8).